The primary structure comprises 307 residues: Thymidylate synthase (307 aa).

The disordered stretch occupies residues 1 to 22; that stretch reads MLVEGSELQSGAQQPRTEAPQH. Positions 7 to 16 are enriched in polar residues; that stretch reads ELQSGAQQPR. DUMP is bound at residue Arg44. Residue Ser108 is modified to Phosphoserine. Residues 169–170, 189–190, 209–212, Asn220, and 250–252 each bind dUMP; these read RR, CH, RSGD, and HIY. Cys189 serves as the catalytic Nucleophile. Asp212 is a binding site for (6R)-5,10-methylene-5,6,7,8-tetrahydrofolate. Glycyl lysine isopeptide (Lys-Gly) (interchain with G-Cter in SUMO2) cross-links involve residues Lys286 and Lys302. Position 306 (Ala306) interacts with (6R)-5,10-methylene-5,6,7,8-tetrahydrofolate.

It belongs to the thymidylate synthase family. Homodimer.

It localises to the nucleus. The protein localises to the cytoplasm. The protein resides in the mitochondrion. It is found in the mitochondrion matrix. Its subcellular location is the mitochondrion inner membrane. It carries out the reaction dUMP + (6R)-5,10-methylene-5,6,7,8-tetrahydrofolate = 7,8-dihydrofolate + dTMP. It functions in the pathway pyrimidine metabolism; dTTP biosynthesis. Catalyzes the reductive methylation of 2'-deoxyuridine 5'-monophosphate (dUMP) to thymidine 5'-monophosphate (dTMP), using the cosubstrate, 5,10- methylenetetrahydrofolate (CH2H4folate) as a 1-carbon donor and reductant and contributes to the de novo mitochondrial thymidylate biosynthesis pathway. This chain is Thymidylate synthase (Tyms), found in Rattus norvegicus (Rat).